The following is a 2104-amino-acid chain: Protein Ycf2 (2104 aa).

1396–1403 (GPVETGRS) contacts ATP.

It belongs to the Ycf2 family.

The protein localises to the plastid. The protein resides in the chloroplast stroma. Probable ATPase of unknown function. Its presence in a non-photosynthetic plant (Epifagus virginiana) and experiments in tobacco indicate that it has an essential function which is probably not related to photosynthesis. The protein is Protein Ycf2 (ycf2-A) of Adiantum capillus-veneris (Maidenhair fern).